Reading from the N-terminus, the 316-residue chain is Biotin synthase (316 aa).

In terms of domain architecture, Radical SAM core spans 36-264 (TEIQISTLLS…ASRVRLAAGR (229 aa)). [4Fe-4S] cluster-binding residues include Cys-51, Cys-55, and Cys-58. Residues Cys-96, Cys-127, Cys-187, and Arg-259 each coordinate [2Fe-2S] cluster.

Belongs to the radical SAM superfamily. Biotin synthase family. In terms of assembly, homodimer. Requires [4Fe-4S] cluster as cofactor. [2Fe-2S] cluster is required as a cofactor.

The enzyme catalyses (4R,5S)-dethiobiotin + (sulfur carrier)-SH + 2 reduced [2Fe-2S]-[ferredoxin] + 2 S-adenosyl-L-methionine = (sulfur carrier)-H + biotin + 2 5'-deoxyadenosine + 2 L-methionine + 2 oxidized [2Fe-2S]-[ferredoxin]. It functions in the pathway cofactor biosynthesis; biotin biosynthesis; biotin from 7,8-diaminononanoate: step 2/2. Catalyzes the conversion of dethiobiotin (DTB) to biotin by the insertion of a sulfur atom into dethiobiotin via a radical-based mechanism. In Gluconacetobacter diazotrophicus (strain ATCC 49037 / DSM 5601 / CCUG 37298 / CIP 103539 / LMG 7603 / PAl5), this protein is Biotin synthase.